The primary structure comprises 274 residues: Triosephosphate isomerase (274 aa).

31–33 is a binding site for substrate; that stretch reads NWK. Residue histidine 118 is the Electrophile of the active site. The active-site Proton acceptor is the glutamate 188. Substrate is bound by residues glycine 194, serine 234, and 255 to 256; that span reads GG.

This sequence belongs to the triosephosphate isomerase family. In terms of assembly, homodimer.

Its subcellular location is the cytoplasm. The catalysed reaction is D-glyceraldehyde 3-phosphate = dihydroxyacetone phosphate. Its pathway is carbohydrate biosynthesis; gluconeogenesis. It participates in carbohydrate degradation; glycolysis; D-glyceraldehyde 3-phosphate from glycerone phosphate: step 1/1. In terms of biological role, involved in the gluconeogenesis. Catalyzes stereospecifically the conversion of dihydroxyacetone phosphate (DHAP) to D-glyceraldehyde-3-phosphate (G3P). This is Triosephosphate isomerase from Chlamydia trachomatis serovar L2 (strain ATCC VR-902B / DSM 19102 / 434/Bu).